The primary structure comprises 214 residues: Metalloproteinase inhibitor 3 (214 aa).

An N-terminal signal peptide occupies residues 1 to 26 (MVFSTTAALSLLLALSSMQLSEVSEA). Residue C27 participates in Zn(2+) binding. Involved in metalloproteinase-binding stretches follow at residues 27–30 (CTCM) and 91–92 (ES). 6 disulfides stabilise this stretch: C27-C94, C29-C121, C39-C146, C148-C195, C153-C158, and C166-C187. In terms of domain architecture, NTR spans 27 to 146 (CTCMPNHPQE…GLNHRYQYGC (120 aa)). N210 carries N-linked (GlcNAc...) asparagine glycosylation.

It belongs to the protease inhibitor I35 (TIMP) family. As to expression, expressed abundantly in brain and cartilage.

The protein localises to the secreted. It is found in the extracellular space. The protein resides in the extracellular matrix. In terms of biological role, complexes with metalloproteinases (such as collagenases) and irreversibly inactivates them by binding to their catalytic zinc cofactor. May form part of a tissue-specific acute response to remodeling stimuli. This chain is Metalloproteinase inhibitor 3 (TIMP3), found in Scyliorhinus torazame (Cloudy catshark).